Consider the following 142-residue polypeptide: Large-conductance mechanosensitive channel (142 aa).

Transmembrane regions (helical) follow at residues 14–34 (VMDLAVGVIIGAAFSKIVDSV), 38–58 (LVMPVVGAITGGGFDFSNYFL), and 82–102 (GNFITVLINFLILAWIIFLLI).

Belongs to the MscL family. In terms of assembly, homopentamer.

It localises to the cell inner membrane. In terms of biological role, channel that opens in response to stretch forces in the membrane lipid bilayer. May participate in the regulation of osmotic pressure changes within the cell. The protein is Large-conductance mechanosensitive channel of Rhizobium meliloti (strain 1021) (Ensifer meliloti).